A 176-amino-acid chain; its full sequence is 2-C-methyl-D-erythritol 2,4-cyclodiphosphate synthase (176 aa).

Residues D22 and H24 each contribute to the a divalent metal cation site. 4-CDP-2-C-methyl-D-erythritol 2-phosphate contacts are provided by residues 22 to 24 and 48 to 49; these read DVH and HS. Residue H56 participates in a divalent metal cation binding. 4-CDP-2-C-methyl-D-erythritol 2-phosphate contacts are provided by residues 70-72, 146-149, F153, and R156; these read DIG and TTSE.

Belongs to the IspF family. Homotrimer. The cofactor is a divalent metal cation.

The catalysed reaction is 4-CDP-2-C-methyl-D-erythritol 2-phosphate = 2-C-methyl-D-erythritol 2,4-cyclic diphosphate + CMP. It functions in the pathway isoprenoid biosynthesis; isopentenyl diphosphate biosynthesis via DXP pathway; isopentenyl diphosphate from 1-deoxy-D-xylulose 5-phosphate: step 4/6. Its function is as follows. Involved in the biosynthesis of isopentenyl diphosphate (IPP) and dimethylallyl diphosphate (DMAPP), two major building blocks of isoprenoid compounds. Catalyzes the conversion of 4-diphosphocytidyl-2-C-methyl-D-erythritol 2-phosphate (CDP-ME2P) to 2-C-methyl-D-erythritol 2,4-cyclodiphosphate (ME-CPP) with a corresponding release of cytidine 5-monophosphate (CMP). The polypeptide is 2-C-methyl-D-erythritol 2,4-cyclodiphosphate synthase (Xylella fastidiosa (strain 9a5c)).